A 307-amino-acid chain; its full sequence is Cytochrome f (307 aa).

The signal sequence occupies residues 1 to 24 (MKKNLFLVSVFASLFVGTANNALA). Heme-binding residues include Tyr25, Cys45, Cys48, and His49. A helical membrane pass occupies residues 273–293 (LQGLVIFLGFVLIAQVFLVLK).

This sequence belongs to the cytochrome f family. The 4 large subunits of the cytochrome b6-f complex are cytochrome b6, subunit IV (17 kDa polypeptide, petD), cytochrome f and the Rieske protein, while the 4 small subunits are PetG, PetL, PetM and PetN. The complex functions as a dimer. It depends on heme as a cofactor.

It is found in the plastid. The protein resides in the chloroplast thylakoid membrane. Component of the cytochrome b6-f complex, which mediates electron transfer between photosystem II (PSII) and photosystem I (PSI), cyclic electron flow around PSI, and state transitions. This is Cytochrome f from Ostreococcus tauri.